A 498-amino-acid chain; its full sequence is WD repeat-containing protein 55 homolog (498 aa).

The interval 1–131 (MHTHNNFKTP…ATFDLDEDDE (131 aa)) is disordered. Composition is skewed to acidic residues over residues 12–23 (DEDELDDLDEDM) and 31–48 (IEQE…EYDL). Composition is skewed to low complexity over residues 67-82 (NDSS…NAAD) and 93-103 (AGGVTAGGATS). 6 WD repeats span residues 154-193 (KLED…NKLL), 198-237 (VHSK…LKKL), 241-279 (AHDD…AIFE), 282-321 (ELED…MYVQ), 324-363 (PYEE…YHCD), and 408-447 (QHNM…DFGD). Positions 478-498 (DLTKENADGDDDPGAGPSNMA) are disordered.

It belongs to the WD repeat WDR55 family.

The polypeptide is WD repeat-containing protein 55 homolog (Drosophila melanogaster (Fruit fly)).